Reading from the N-terminus, the 270-residue chain is Zinc finger protein ZAT2 (270 aa).

Polar residues-rich tracts occupy residues 1-28 and 36-48; these read MSNTSNSDPNSDIPFASSNVTLPSYNQN and LTNNEVGSSSSSP. The disordered stretch occupies residues 1–64; that stretch reads MSNTSNSDPN…QPDPDASQIA (64 aa). A C2H2-type 1 zinc finger spans residues 65–87; it reads RPCTECGKQFGSLKALFGHMRCH. Residues 95–119 form a disordered region; sequence INPPSNFKRRINSNAASSSSSWDPS. Positions 106–115 are enriched in low complexity; it reads NSNAASSSSS. 2 C2H2-type zinc fingers span residues 148–170 and 211–233; these read FECDGCKKVFGSHQALGGHRATH and HRCNICSRVFSSGQALGGHMRCH.

Interacts (via the EAR motif) with TPL. As to expression, expressed exclusively in pollen.

Its subcellular location is the nucleus. Mediates the regulation of male germ cell division by DUO1. The protein is Zinc finger protein ZAT2 of Arabidopsis thaliana (Mouse-ear cress).